Consider the following 112-residue polypeptide: Replication initiation control protein YabA (112 aa).

Residues His85, Cys87, Cys101, and Cys104 each contribute to the Zn(2+) site.

The protein belongs to the YabA family. In terms of assembly, homotetramer. Interacts with both DnaA and DnaN, acting as a bridge between these two proteins. It depends on Zn(2+) as a cofactor.

The protein resides in the cytoplasm. The protein localises to the nucleoid. Functionally, involved in control of chromosome replication initiation. Inhibits the cooperative binding of DnaA to the oriC region, thus negatively regulating initiation of chromosome replication. Inhibits the ability of DnaA-ATP to form a helix on DNA; does not disassemble preformed DnaA-DNA helices. Decreases the residence time of DnaA on the chromosome at its binding sites (oriC, replication forks and promoter-binding sites). Tethers DnaA to the replication machinery via the DNA polymerase beta sliding clamp subunit (dnaN). Associates with oriC and other DnaA targets on the chromosome in a DnaA-dependent manner. In Lacticaseibacillus casei (strain BL23) (Lactobacillus casei), this protein is Replication initiation control protein YabA.